The chain runs to 363 residues: 5-formaminoimidazole-4-carboxamide-1-(beta)-D-ribofuranosyl 5'-monophosphate synthetase (363 aa).

The 5-amino-1-(5-phospho-beta-D-ribosyl)imidazole-4-carboxamide site is built by His-29 and Ser-96. An ATP-grasp domain is found at 118–354 (RDILRWEAER…IALEIKNAIK (237 aa)). ATP is bound by residues 148-210 (PSEI…CNYC) and Glu-232. Asn-260 contacts 5-amino-1-(5-phospho-beta-D-ribosyl)imidazole-4-carboxamide. Mg(2+) contacts are provided by Gln-299 and Glu-312.

The protein belongs to the phosphohexose mutase family. The cofactor is Mg(2+). Mn(2+) serves as cofactor.

The enzyme catalyses 5-amino-1-(5-phospho-beta-D-ribosyl)imidazole-4-carboxamide + formate + ATP = 5-formamido-1-(5-phospho-D-ribosyl)imidazole-4-carboxamide + ADP + phosphate. It functions in the pathway purine metabolism; IMP biosynthesis via de novo pathway; 5-formamido-1-(5-phospho-D-ribosyl)imidazole-4-carboxamide from 5-amino-1-(5-phospho-D-ribosyl)imidazole-4-carboxamide (formate route): step 1/1. Catalyzes the ATP- and formate-dependent formylation of 5-aminoimidazole-4-carboxamide-1-beta-d-ribofuranosyl 5'-monophosphate (AICAR) to 5-formaminoimidazole-4-carboxamide-1-beta-d-ribofuranosyl 5'-monophosphate (FAICAR) in the absence of folates. The polypeptide is 5-formaminoimidazole-4-carboxamide-1-(beta)-D-ribofuranosyl 5'-monophosphate synthetase (Methanobrevibacter smithii (strain ATCC 35061 / DSM 861 / OCM 144 / PS)).